The chain runs to 108 residues: Nucleoid-associated protein Bphy_0952 (108 aa).

The interval 87–108 (AQEKMGGMTSGLPLPPGFKLPF) is disordered. Residues 99–108 (PLPPGFKLPF) are compositionally biased toward pro residues.

Belongs to the YbaB/EbfC family. As to quaternary structure, homodimer.

The protein resides in the cytoplasm. It is found in the nucleoid. Its function is as follows. Binds to DNA and alters its conformation. May be involved in regulation of gene expression, nucleoid organization and DNA protection. This is Nucleoid-associated protein Bphy_0952 from Paraburkholderia phymatum (strain DSM 17167 / CIP 108236 / LMG 21445 / STM815) (Burkholderia phymatum).